The chain runs to 426 residues: CinA-like protein (426 aa).

Belongs to the CinA family.

This Gloeobacter violaceus (strain ATCC 29082 / PCC 7421) protein is CinA-like protein.